Reading from the N-terminus, the 584-residue chain is MQFGELVKALAAVESTTQRSVMVKLLASLFKKALPEEIDKVIYLILGDLRPPWEGLELGVGEKLCLRALAKATGTSQAELESMYKKTGDIGEAARRALASSKRPGLLAFGSQKPLEVSEVYDALIKVARATGEGAQDMKIALLSSLFARSSPEEGKYIARFVVGKLRLGVADMTIIEALADAYGVRKEDLERAYHVYPDLGHLAKLVASGKPLDEVKVTPGVPVLPMLAQRLSSSSEILAKLGGAAICEYKYDGERAQIHISQSGVRIFSRRLEDITHAYPDVVKAVREAVSAREAILEGEIVAVDPDTGEMLPFQELMHRKRKHEVAAAMEMYPTVLYLFDIVYVDGEDLTNEPLIYRRVKLSEIVHESDKVQIAKWQMFDDPDTVDVFFHEAVSVGTEGLICKSPTSEYEMGARGWNWIKYKRDYKSEMIDTVDLVVVGAFYGRGKRAGLYGAFLLAAYDPSSDMFYTVCKVGSGFTDADLKKMYEILQPLKIPHRHPRVSSKMEADVWFVPQVVIEVIGAEITLSPLHTCCLGAVRPGVGLAVRFPRFTGRYRTDKGPEQATTVAEMLELYKRQKKVAQPE.

E249 provides a ligand contact to ATP. K251 serves as the catalytic N6-AMP-lysine intermediate. Residues R256, R271, E301, F341, R416, and K422 each coordinate ATP.

It belongs to the ATP-dependent DNA ligase family. It depends on Mg(2+) as a cofactor.

It carries out the reaction ATP + (deoxyribonucleotide)n-3'-hydroxyl + 5'-phospho-(deoxyribonucleotide)m = (deoxyribonucleotide)n+m + AMP + diphosphate.. In terms of biological role, DNA ligase that seals nicks in double-stranded DNA during DNA replication, DNA recombination and DNA repair. This chain is DNA ligase, found in Pyrobaculum arsenaticum (strain DSM 13514 / JCM 11321 / PZ6).